The primary structure comprises 174 residues: Trypsin inhibitor (174 aa).

2 cysteine pairs are disulfide-bonded: cysteine 40-cysteine 86 and cysteine 131-cysteine 140.

Belongs to the protease inhibitor I3 (leguminous Kunitz-type inhibitor) family. Heterodimer of an alpha and a beta chain linked by a disulfide bond.

Functionally, inhibits trypsin and chymotrypsin with a 1:1 stoichiometry, with dissociation constants of 1.56 nM and 120 nM respectively. Inhibits plasma kallikrein, factor XIIa and plasmin with dissociation constants of 5.0 nM, 150 nM and 18 nM respectively. Does not inhibit factor Xa, thrombin, tissue kallikrein or cysteine proteinases such as papain and bromelain. The polypeptide is Trypsin inhibitor (Enterolobium contortisiliquum (Pacara earpod tree)).